A 66-amino-acid chain; its full sequence is Large ribosomal subunit protein bL35 (66 aa).

Belongs to the bacterial ribosomal protein bL35 family.

In Bradyrhizobium diazoefficiens (strain JCM 10833 / BCRC 13528 / IAM 13628 / NBRC 14792 / USDA 110), this protein is Large ribosomal subunit protein bL35.